We begin with the raw amino-acid sequence, 487 residues long: DEAD-box ATP-dependent RNA helicase CshA (487 aa).

The Q motif signature appears at 3 to 31 (ITFQDFQLSSDLTKAIKRMGFEEATPIQA). The region spanning 34-204 (IPLGLANKDV…ERFMTNPEHV (171 aa)) is the Helicase ATP-binding domain. 47-54 (AQTGTGKT) provides a ligand contact to ATP. The DEAD box motif lies at 152-155 (DEAD). Positions 215 to 375 (NIQQFYLEVH…RMKAPTLDEA (161 aa)) constitute a Helicase C-terminal domain. Positions 428 to 440 (DNTPVRLTEEAPL) are enriched in basic and acidic residues. Residues 428 to 487 (DNTPVRLTEEAPLRTKRNKNHHHRSSKRRDGGGYRGKNNRSSYDKKRSSNDRRQKKSYNS) form a disordered region. Residues 441–454 (RTKRNKNHHHRSSK) show a composition bias toward basic residues. Residues 469 to 479 (SYDKKRSSNDR) are compositionally biased toward basic and acidic residues.

This sequence belongs to the DEAD box helicase family. CshA subfamily. Oligomerizes, may be a member of the RNA degradosome.

The protein resides in the cytoplasm. It catalyses the reaction ATP + H2O = ADP + phosphate + H(+). DEAD-box RNA helicase possibly involved in RNA degradation. Unwinds dsRNA in both 5'- and 3'-directions, has RNA-dependent ATPase activity. The polypeptide is DEAD-box ATP-dependent RNA helicase CshA (Bacillus licheniformis (strain ATCC 14580 / DSM 13 / JCM 2505 / CCUG 7422 / NBRC 12200 / NCIMB 9375 / NCTC 10341 / NRRL NRS-1264 / Gibson 46)).